Consider the following 332-residue polypeptide: Methionyl-tRNA formyltransferase (332 aa).

114–117 (SLLP) is a (6S)-5,6,7,8-tetrahydrofolate binding site.

It belongs to the Fmt family.

The enzyme catalyses L-methionyl-tRNA(fMet) + (6R)-10-formyltetrahydrofolate = N-formyl-L-methionyl-tRNA(fMet) + (6S)-5,6,7,8-tetrahydrofolate + H(+). Functionally, attaches a formyl group to the free amino group of methionyl-tRNA(fMet). The formyl group appears to play a dual role in the initiator identity of N-formylmethionyl-tRNA by promoting its recognition by IF2 and preventing the misappropriation of this tRNA by the elongation apparatus. The protein is Methionyl-tRNA formyltransferase of Corynebacterium aurimucosum (strain ATCC 700975 / DSM 44827 / CIP 107346 / CN-1) (Corynebacterium nigricans).